Here is a 570-residue protein sequence, read N- to C-terminus: Protein B602L (570 aa).

A run of 20 repeats spans residues 161 to 164 (CADT), 165 to 168 (NAST), 169 to 172 (SADT), 173 to 176 (NAST), 177 to 180 (CADT), 181 to 184 (NVDT), 185 to 188 (CAST), 189 to 192 (CADT), 193 to 196 (NVDT), 197 to 200 (CADT), 201 to 204 (CAST), 205 to 208 (CAST), 209 to 212 (CAST), 213 to 216 (CAST), 217 to 220 (CADT), 221 to 224 (NVDT), 225 to 228 (CADT), 229 to 232 (CVST), 233 to 236 (CAST), and 237 to 240 (CANT). The segment at 161–240 (CADTNASTSA…STCASTCANT (80 aa)) is 20 X 4 AA tandem repeats of [CNS]-[ATV]-[DNS]-T.

The protein belongs to the asfivirus B602L family.

Its subcellular location is the host cytoplasm. In terms of biological role, plays an essential role in the assembly of the icosahedral capsid of the virus. Allows the assembly of 3 molecules of hexon protein p72 and formation of a thermostable trimer. The sequence is that of Protein B602L from African swine fever virus (isolate Tick/South Africa/Pretoriuskop Pr4/1996) (ASFV).